We begin with the raw amino-acid sequence, 157 residues long: Endoribonuclease YbeY (157 aa).

Zn(2+)-binding residues include His114, His118, and His124.

This sequence belongs to the endoribonuclease YbeY family. It depends on Zn(2+) as a cofactor.

It localises to the cytoplasm. In terms of biological role, single strand-specific metallo-endoribonuclease involved in late-stage 70S ribosome quality control and in maturation of the 3' terminus of the 16S rRNA. The sequence is that of Endoribonuclease YbeY from Salmonella typhimurium (strain LT2 / SGSC1412 / ATCC 700720).